The following is a 340-amino-acid chain: Dihydroorotate dehydrogenase (quinone) (340 aa).

FMN-binding positions include 61–65 (AGLDK) and T85. K65 contacts substrate. 110-114 (NRMGF) is a substrate binding site. Positions 138 and 171 each coordinate FMN. A substrate-binding site is contributed by N171. The active-site Nucleophile is S174. Residue N176 participates in substrate binding. FMN is bound by residues K216 and T244. 245–246 (NT) is a binding site for substrate. FMN-binding positions include G267, G296, and 317–318 (YS).

The protein belongs to the dihydroorotate dehydrogenase family. Type 2 subfamily. As to quaternary structure, monomer. It depends on FMN as a cofactor.

Its subcellular location is the cell membrane. The catalysed reaction is (S)-dihydroorotate + a quinone = orotate + a quinol. It functions in the pathway pyrimidine metabolism; UMP biosynthesis via de novo pathway; orotate from (S)-dihydroorotate (quinone route): step 1/1. Its function is as follows. Catalyzes the conversion of dihydroorotate to orotate with quinone as electron acceptor. The sequence is that of Dihydroorotate dehydrogenase (quinone) from Pseudomonas putida (strain ATCC 47054 / DSM 6125 / CFBP 8728 / NCIMB 11950 / KT2440).